A 207-amino-acid chain; its full sequence is Putative 3-methyladenine DNA glycosylase (207 aa).

The protein belongs to the DNA glycosylase MPG family.

The polypeptide is Putative 3-methyladenine DNA glycosylase (Listeria welshimeri serovar 6b (strain ATCC 35897 / DSM 20650 / CCUG 15529 / CIP 8149 / NCTC 11857 / SLCC 5334 / V8)).